The chain runs to 100 residues: Small ribosomal subunit protein uS14c (100 aa).

This sequence belongs to the universal ribosomal protein uS14 family. In terms of assembly, part of the 30S ribosomal subunit.

Its subcellular location is the plastid. It is found in the chloroplast. In terms of biological role, binds 16S rRNA, required for the assembly of 30S particles. The protein is Small ribosomal subunit protein uS14c of Guillardia theta (Cryptophyte).